A 437-amino-acid chain; its full sequence is Transmembrane protease serine 4 (437 aa).

Over 1–32 the chain is Cytoplasmic; the sequence is MLQDPDSDQPLNSLDVKPLRKPRIPMETFRKV. Residues 33–53 traverse the membrane as a helical; Signal-anchor for type II membrane protein segment; sequence GIPIIIALLSLASIIIVVVLI. Residues 54–437 lie on the Extracellular side of the membrane; sequence KVILDKYYFL…WIYNVWKAEL (384 aa). The 33-residue stretch at 61 to 93 folds into the LDL-receptor class A domain; it reads YFLCGQPLHFIPRKQLCDGELDCPLGEDEEHCV. Intrachain disulfides connect Cys-64–Cys-83, Cys-77–Cys-92, Cys-127–Cys-183, Cys-140–Cys-193, Cys-196–Cys-310, Cys-230–Cys-246, Cys-356–Cys-372, and Cys-383–Cys-410. The region spanning 94–204 is the SRCR domain; the sequence is KSFPEGPAVA…ACGKSLKTPR (111 aa). Residues Asn-130 and Asn-178 are each glycosylated (N-linked (GlcNAc...) asparagine). Residues 205 to 434 form the Peptidase S1 domain; that stretch reads VVGVEEASVD…YLNWIYNVWK (230 aa). Active-site charge relay system residues include His-245 and Asp-290. The active-site Charge relay system is the Ser-387.

It belongs to the peptidase S1 family. Post-translationally, proteolytically processed; probably by an autocatalytic mechanism. As to expression, high levels in pancreatic, gastric, colorectal and ampullary cancer. Very weak expression in normal gastrointestinal and urogenital tract. Coexpressed with ACE2 within mature enterocytes.

The protein localises to the cell membrane. It is found in the secreted. Its function is as follows. Plasma membrane-anchored serine protease that directly induces processing of pro-uPA/PLAU into the active form through proteolytic activity. Seems to be capable of activating ENaC. (Microbial infection) In gut epithelial cells, facilitates human coronavirus SARS-CoV-2 infection through, at least, the cleavage of coronavirus spike glycoproteins which activates the glycoprotein for host cell entry. This Homo sapiens (Human) protein is Transmembrane protease serine 4.